We begin with the raw amino-acid sequence, 464 residues long: Soluble pyridine nucleotide transhydrogenase (464 aa).

35 to 44 lines the FAD pocket; that stretch reads DSRRQVGGNC.

The protein belongs to the class-I pyridine nucleotide-disulfide oxidoreductase family. Requires FAD as cofactor.

It localises to the cytoplasm. It carries out the reaction NAD(+) + NADPH = NADH + NADP(+). Functionally, conversion of NADPH, generated by peripheral catabolic pathways, to NADH, which can enter the respiratory chain for energy generation. The polypeptide is Soluble pyridine nucleotide transhydrogenase (Pseudomonas syringae pv. syringae (strain B728a)).